A 214-amino-acid polypeptide reads, in one-letter code: Isochorismatase family protein 2B (214 aa).

The protein belongs to the isochorismatase family.

This is Isochorismatase family protein 2B from Dictyostelium discoideum (Social amoeba).